The primary structure comprises 241 residues: Phosphoribosylaminoimidazole-succinocarboxamide synthase (241 aa).

Belongs to the SAICAR synthetase family.

The catalysed reaction is 5-amino-1-(5-phospho-D-ribosyl)imidazole-4-carboxylate + L-aspartate + ATP = (2S)-2-[5-amino-1-(5-phospho-beta-D-ribosyl)imidazole-4-carboxamido]succinate + ADP + phosphate + 2 H(+). It functions in the pathway purine metabolism; IMP biosynthesis via de novo pathway; 5-amino-1-(5-phospho-D-ribosyl)imidazole-4-carboxamide from 5-amino-1-(5-phospho-D-ribosyl)imidazole-4-carboxylate: step 1/2. This is Phosphoribosylaminoimidazole-succinocarboxamide synthase from Deinococcus geothermalis (strain DSM 11300 / CIP 105573 / AG-3a).